A 677-amino-acid polypeptide reads, in one-letter code: Methionine--tRNA ligase (677 aa).

Positions 15-25 (PYANGSIHLGH) match the 'HIGH' region motif. Residues Cys146, Cys149, Cys159, and Cys162 each contribute to the Zn(2+) site. Residues 333 to 337 (KMSKS) carry the 'KMSKS' region motif. Residue Lys336 participates in ATP binding. The tRNA-binding domain occupies 575–677 (DFAKVDLRVA…AGAKPGHQVK (103 aa)).

The protein belongs to the class-I aminoacyl-tRNA synthetase family. MetG type 1 subfamily. In terms of assembly, homodimer. The cofactor is Zn(2+).

It localises to the cytoplasm. It catalyses the reaction tRNA(Met) + L-methionine + ATP = L-methionyl-tRNA(Met) + AMP + diphosphate. Functionally, is required not only for elongation of protein synthesis but also for the initiation of all mRNA translation through initiator tRNA(fMet) aminoacylation. This chain is Methionine--tRNA ligase, found in Escherichia coli (strain SE11).